Here is a 781-residue protein sequence, read N- to C-terminus: Matrix non-peptidase homolog 1 (781 aa).

An N-terminal signal peptide occupies residues M1–G27. The N-linked (GlcNAc...) asparagine glycan is linked to N54. Low complexity predominate over residues T63–S94. Positions T63–T113 are disordered. N-linked (GlcNAc...) asparagine glycosylation is found at N183, N341, N375, and N520.

The chain is Matrix non-peptidase homolog 1 (mnp-1) from Caenorhabditis elegans.